The primary structure comprises 52 residues: Large ribosomal subunit protein bL33 (52 aa).

The protein belongs to the bacterial ribosomal protein bL33 family.

The sequence is that of Large ribosomal subunit protein bL33 from Anaeromyxobacter sp. (strain Fw109-5).